A 1063-amino-acid polypeptide reads, in one-letter code: Alkane uptake protein B (1063 aa).

Positions 1 to 17 are cleaved as a signal peptide; that stretch reads MKYNKTLALIPAILLAA. Cys18 is lipidated: N-palmitoyl cysteine. Cys18 carries S-diacylglycerol cysteine lipidation.

As to quaternary structure, interacts with the outer membrane protein AupA.

Its subcellular location is the cell inner membrane. In terms of biological role, required for growth on alkanes. Probably involved in the uptake of micelle-solubilized alkanes. May facilitate the transfer of alkanes from the outer membrane to the inner membrane. The sequence is that of Alkane uptake protein B from Marinobacter nauticus (strain ATCC 49840 / DSM 8798 / CIP 103578 / SP17) (Marinobacter hydrocarbonoclasticus).